Here is a 266-residue protein sequence, read N- to C-terminus: Inositol-1-monophosphatase (266 aa).

Mg(2+) contacts are provided by Glu69, Asp86, Leu88, and Asp89. Glu69 provides a ligand contact to substrate. Substrate is bound by residues 88-91, Arg185, and Asp214; that span reads LDGT. Asp214 provides a ligand contact to Mg(2+).

The protein belongs to the inositol monophosphatase superfamily. The cofactor is Mg(2+).

The enzyme catalyses a myo-inositol phosphate + H2O = myo-inositol + phosphate. The sequence is that of Inositol-1-monophosphatase (suhB) from Rhizobium meliloti (strain 1021) (Ensifer meliloti).